Here is a 382-residue protein sequence, read N- to C-terminus: Serine/arginine-rich splicing factor SR45a (382 aa).

4 stretches are compositionally biased toward low complexity: residues 30–45 (PMSY…SLSP), 54–68 (VSRS…SVSS), 177–195 (PSYS…SRSY), and 202–219 (SYSP…YSPF). Disordered regions lie at residues 30-76 (PMSY…PGNS) and 150-382 (KARR…SVSP). Residues 288 to 316 (RARDRSCSPYYRGRDRSYSPHYQGRDRSY) show a composition bias toward basic and acidic residues. The segment covering 329–343 (VSGSVSPGGRSMSRS) has biased composition (low complexity). Positions 345–361 (SPRKGRKESRSKSRRHD) are enriched in basic residues. Residues 364-382 (SSMCHSRSARSSTSRSVSP) are compositionally biased toward low complexity.

Belongs to the splicing factor SR family. SR45 subfamily. In terms of assembly, component of the spliceosome. Homodimer. Interacts with PRP38, SCL28, SR45, RNU1 and U2AF35B. Post-translationally, phosphorylated. In terms of tissue distribution, expressed in leaves, stems and roots.

It is found in the nucleus speckle. Functionally, probable splicing factor involved in constitutive and/or alternative splicing events. May bridge the 5' and 3' components of the spliceosome. This is Serine/arginine-rich splicing factor SR45a (SR45A) from Arabidopsis thaliana (Mouse-ear cress).